Here is a 660-residue protein sequence, read N- to C-terminus: tRNA 5-methylaminomethyl-2-thiouridine biosynthesis bifunctional protein MnmC (660 aa).

Residues 1 to 235 (MTITRHARID…KWEVLRGTFI (235 aa)) form a tRNA (mnm(5)s(2)U34)-methyltransferase region. An FAD-dependent cmnm(5)s(2)U34 oxidoreductase region spans residues 266 to 660 (IGAGLAGCAT…LRGLIRGGGK (395 aa)).

In the N-terminal section; belongs to the methyltransferase superfamily. tRNA (mnm(5)s(2)U34)-methyltransferase family. The protein in the C-terminal section; belongs to the DAO family. Requires FAD as cofactor.

The protein localises to the cytoplasm. It carries out the reaction 5-aminomethyl-2-thiouridine(34) in tRNA + S-adenosyl-L-methionine = 5-methylaminomethyl-2-thiouridine(34) in tRNA + S-adenosyl-L-homocysteine + H(+). Catalyzes the last two steps in the biosynthesis of 5-methylaminomethyl-2-thiouridine (mnm(5)s(2)U) at the wobble position (U34) in tRNA. Catalyzes the FAD-dependent demodification of cmnm(5)s(2)U34 to nm(5)s(2)U34, followed by the transfer of a methyl group from S-adenosyl-L-methionine to nm(5)s(2)U34, to form mnm(5)s(2)U34. In Pseudomonas savastanoi pv. phaseolicola (strain 1448A / Race 6) (Pseudomonas syringae pv. phaseolicola (strain 1448A / Race 6)), this protein is tRNA 5-methylaminomethyl-2-thiouridine biosynthesis bifunctional protein MnmC.